The following is a 447-amino-acid chain: Tol-Pal system protein TolB (447 aa).

Positions 1 to 34 (MSSRLPALPLSRRQALLGGAGSAAALLLPGGAQA) are cleaved as a signal peptide. The disordered stretch occupies residues 426-447 (RNEQKVPTPGFASDPAWSPLLS).

Belongs to the TolB family. As to quaternary structure, the Tol-Pal system is composed of five core proteins: the inner membrane proteins TolA, TolQ and TolR, the periplasmic protein TolB and the outer membrane protein Pal. They form a network linking the inner and outer membranes and the peptidoglycan layer.

It localises to the periplasm. In terms of biological role, part of the Tol-Pal system, which plays a role in outer membrane invagination during cell division and is important for maintaining outer membrane integrity. This is Tol-Pal system protein TolB from Rhodopseudomonas palustris (strain BisB18).